Consider the following 276-residue polypeptide: Pantothenate synthetase (276 aa).

Methionine 27–histidine 34 serves as a coordination point for ATP. Histidine 34 serves as the catalytic Proton donor. Position 58 (glutamine 58) interacts with (R)-pantoate. Glutamine 58 serves as a coordination point for beta-alanine. Position 147 to 150 (glycine 147 to aspartate 150) interacts with ATP. Glutamine 153 serves as a coordination point for (R)-pantoate. ATP is bound by residues valine 176 and leucine 184–arginine 187.

Belongs to the pantothenate synthetase family. In terms of assembly, homodimer.

The protein resides in the cytoplasm. It catalyses the reaction (R)-pantoate + beta-alanine + ATP = (R)-pantothenate + AMP + diphosphate + H(+). Its pathway is cofactor biosynthesis; (R)-pantothenate biosynthesis; (R)-pantothenate from (R)-pantoate and beta-alanine: step 1/1. Functionally, catalyzes the condensation of pantoate with beta-alanine in an ATP-dependent reaction via a pantoyl-adenylate intermediate. In Helicobacter pylori (strain Shi470), this protein is Pantothenate synthetase.